We begin with the raw amino-acid sequence, 341 residues long: Hyaluronan and proteoglycan link protein 2 (341 aa).

Residues 1-27 form the signal peptide; it reads MPSWIPLPAFCCLLLPWAFTVFHKTLG. An Ig-like V-type domain is found at 35–143; sequence PHYLLPPIHE…GIEDESVALT (109 aa). Disulfide bonds link Cys-58–Cys-129, Cys-171–Cys-241, Cys-195–Cys-216, Cys-266–Cys-337, and Cys-291–Cys-312. 2 consecutive Link domains span residues 149–243 and 246–339; these read VVFP…FCFT and LAGQ…YCYA.

It belongs to the HAPLN family. Brain.

The protein resides in the secreted. The protein localises to the extracellular space. Its subcellular location is the extracellular matrix. Mediates a firm binding of versican V2 to hyaluronic acid. May play a pivotal role in the formation of the hyaluronan-associated matrix in the central nervous system (CNS) which facilitates neuronal conduction and general structural stabilization. Binds to hyaluronic acid. The sequence is that of Hyaluronan and proteoglycan link protein 2 (Hapln2) from Rattus norvegicus (Rat).